The sequence spans 625 residues: MQNTAKKATLPATALAALGVVFGDIGTSPLYALKESFHAAHGLGIQPENVLGILSIIFWCLMLIISIKYVAIVMRADNNGEGGIMALLALNLRKAKIADNKKIYMIAIGFIGASLFFGDGIITPAISVLSAVEGLSIATDVFDPFIMPIAIAIIVTLFLVQKHGTAFVGKFFGPITLVWFLSLGILGIHSVIQTPVVLGMFSPHWAIQFIYHHPIMTFFVMGAVVLTVTGGEALYADMGHFGPVPIRLAWFFVVLPCLVLNYAGQGALLLRDPAAIENPFYLLVPQWALYPMIIMATMATVIASQAVISGVFSLARQAIQLGYLPRLSIKHTSESEEGQIYVPFLNWLLLIAIIILILIFKTSSNLASAYGLAVTLTMLCDTILVAVFIYSAWKWSLPKVLLLIIPFFILESVLVGATSLKILSGGWVPLLIGAIAVTILMTWKRGRELTFAKLEHDTLSLDLFVKSIGNSVHWVPGDAVFMTGTPNVVPHAMLHNIKHNKVLHQRNILVTVVIEDVPFVAPEERITTETLAEHFFRIKIFYGFKDEMNVPKALMQAYEQLGLEYDLMHISFFISRDRIVHSVGDGMSPWREKLFISMQRNTSPVSDFYQIPTNRVVELGSQIEI.

A run of 12 helical transmembrane segments spans residues 13 to 33 (TALA…LYAL), 53 to 73 (ILSI…VAIV), 103 to 123 (IYMI…GIIT), 141 to 161 (VFDP…FLVQ), 172 to 192 (FGPI…HSVI), 206 to 226 (AIQF…AVVL), 250 to 270 (WFFV…ALLL), 282 to 302 (LLVP…ATVI), 340 to 360 (IYVP…ILIF), 369 to 389 (AYGL…AVFI), 400 to 420 (VLLL…ATSL), and 422 to 442 (ILSG…ILMT).

The protein belongs to the HAK/KUP transporter (TC 2.A.72) family.

It localises to the cell inner membrane. The catalysed reaction is K(+)(in) + H(+)(in) = K(+)(out) + H(+)(out). In terms of biological role, transport of potassium into the cell. Likely operates as a K(+):H(+) symporter. The polypeptide is Probable potassium transport system protein Kup (Acinetobacter baumannii (strain ACICU)).